The following is a 520-amino-acid chain: Aldehyde dehydrogenase 5, mitochondrial (520 aa).

Residues 1–23 (MLSRTRAAAPNSRIFTRSLLRLY) constitute a mitochondrion transit peptide. 266–271 (GSTATG) is a binding site for NAD(+). The active-site Proton acceptor is glutamate 288. Residue cysteine 322 is the Nucleophile of the active site.

Belongs to the aldehyde dehydrogenase family.

The protein localises to the mitochondrion matrix. It catalyses the reaction an aldehyde + NADP(+) + H2O = a carboxylate + NADPH + 2 H(+). It carries out the reaction an aldehyde + NAD(+) + H2O = a carboxylate + NADH + 2 H(+). The protein operates within alcohol metabolism; ethanol degradation; acetate from ethanol: step 2/2. Induced by potassium ions. Minor mitochondrial aldehyde dehydrogenase isoform. Plays a role in regulation or biosynthesis of electron transport chain components. Involved in the biosynthesis of acetate during anaerobic growth on glucose. The sequence is that of Aldehyde dehydrogenase 5, mitochondrial (ALD5) from Saccharomyces cerevisiae (strain YJM789) (Baker's yeast).